The primary structure comprises 106 residues: Nucleoid-associated protein XC_3243 (106 aa).

A disordered region spans residues 82 to 106 (DAESKERMGSATAGMQLPPGMKLPF).

It belongs to the YbaB/EbfC family. As to quaternary structure, homodimer.

It is found in the cytoplasm. It localises to the nucleoid. Binds to DNA and alters its conformation. May be involved in regulation of gene expression, nucleoid organization and DNA protection. The polypeptide is Nucleoid-associated protein XC_3243 (Xanthomonas campestris pv. campestris (strain 8004)).